A 346-amino-acid polypeptide reads, in one-letter code: Uroporphyrinogen decarboxylase (346 aa).

Substrate-binding positions include 26–30 (RQAGR), D76, Y153, S208, and H323.

The protein belongs to the uroporphyrinogen decarboxylase family. As to quaternary structure, homodimer.

It is found in the cytoplasm. The catalysed reaction is uroporphyrinogen III + 4 H(+) = coproporphyrinogen III + 4 CO2. The protein operates within porphyrin-containing compound metabolism; protoporphyrin-IX biosynthesis; coproporphyrinogen-III from 5-aminolevulinate: step 4/4. In terms of biological role, catalyzes the decarboxylation of four acetate groups of uroporphyrinogen-III to yield coproporphyrinogen-III. In Prochlorococcus marinus (strain AS9601), this protein is Uroporphyrinogen decarboxylase.